Here is an 84-residue protein sequence, read N- to C-terminus: Small ribosomal subunit protein bS20 (84 aa).

The protein belongs to the bacterial ribosomal protein bS20 family.

Its function is as follows. Binds directly to 16S ribosomal RNA. This Porphyromonas gingivalis (strain ATCC 33277 / DSM 20709 / CIP 103683 / JCM 12257 / NCTC 11834 / 2561) protein is Small ribosomal subunit protein bS20.